We begin with the raw amino-acid sequence, 1194 residues long: UPF0507 protein PICST_55861 (1194 aa).

The 152-residue stretch at 324–475 (QSYDPEAVKF…LSSSLSDELS (152 aa)) folds into the VPS9 domain.

This sequence belongs to the UPF0507 family.

The protein is UPF0507 protein PICST_55861 of Scheffersomyces stipitis (strain ATCC 58785 / CBS 6054 / NBRC 10063 / NRRL Y-11545) (Yeast).